The following is a 237-amino-acid chain: Proteasome subunit beta type-1 (237 aa).

Belongs to the peptidase T1B family. The 26S proteasome consists of a 20S proteasome core and two 19S regulatory subunits. The 20S proteasome core is a barrel-shaped complex made of 28 subunits that are arranged in four stacked rings. The two outer rings are each formed by seven alpha subunits, and the two inner rings are formed by seven beta subunits. The proteolytic activity is exerted by three beta-subunits psmb5, psmb6 and psmb7.

The protein resides in the cytoplasm. Its subcellular location is the nucleus. In terms of biological role, non-catalytic component of the 20S core proteasome complex involved in the proteolytic degradation of most intracellular proteins. This complex plays numerous essential roles within the cell by associating with different regulatory particles. Associated with two 19S regulatory particles, forms the 26S proteasome and thus participates in the ATP-dependent degradation of ubiquitinated proteins. The 26S proteasome plays a key role in the maintenance of protein homeostasis by removing misfolded or damaged proteins that could impair cellular functions, and by removing proteins whose functions are no longer required. Associated with the PA200 or PA28, the 20S proteasome mediates ubiquitin-independent protein degradation. In Danio rerio (Zebrafish), this protein is Proteasome subunit beta type-1.